The following is a 286-amino-acid chain: CLA biosynthesis dehydrogenase/reductase (286 aa).

The NAD(+) site is built by aspartate 37, aspartate 63, valine 64, asparagine 90, tyrosine 156, and lysine 160. The Proton acceptor role is filled by tyrosine 156.

This sequence belongs to the short-chain dehydrogenases/reductases (SDR) family.

It localises to the cytoplasm. The enzyme catalyses (10S)-hydroxy-(12Z)-octadecenoate + NAD(+) = 10-oxo-(12Z)-octadecenoate + NADH + H(+). It catalyses the reaction 10-oxo-(11E)-octadecenoate + NADH + H(+) = 10-hydroxy-(11E)-octadecenoate + NAD(+). It carries out the reaction 10-oxooctadecanoate + NADH + H(+) = 10-hydroxyoctadecanoate + NAD(+). It participates in lipid metabolism; fatty acid metabolism. Its function is as follows. Is involved in a saturation metabolic pathway of polyunsaturated fatty acids, that detoxifies unsaturated fatty acids and generates hydroxy fatty acids, oxo fatty acids, conjugated fatty acids such as conjugated linoleic acids (CLAs), and partially saturated trans-fatty acids as intermediates. CLA-DH catalyzes the dehydrogenation/reduction steps in the production of 10-oxo-(12Z)-octadecenoate, 10-hydroxy-(11E)-octadecenoate and 10-hydroxyoctadecanoate during linoleate metabolism. As part of the gut microbiome, this enzyme modifies host fatty acid composition and is expected to improve human health by altering lipid metabolism related to the onset of metabolic syndrome. The polypeptide is CLA biosynthesis dehydrogenase/reductase (Lactiplantibacillus plantarum (Lactobacillus plantarum)).